Here is a 393-residue protein sequence, read N- to C-terminus: Putative acid--amine ligase HI_0929 (393 aa).

103–105 (RFD) contacts ATP. Mg(2+) is bound by residues D105, E117, and N119. Residues K267, K303, G310, Q343, and 378 to 380 (AVT) each bind ATP.

This sequence belongs to the glutathionylspermidine synthase preATP-grasp family.

In terms of biological role, may be a ligase forming an amide bond. Shows ATPase activity. This Haemophilus influenzae (strain ATCC 51907 / DSM 11121 / KW20 / Rd) protein is Putative acid--amine ligase HI_0929.